A 468-amino-acid chain; its full sequence is Pentatricopeptide repeat-containing protein At5g46680 (468 aa).

PPR repeat units follow at residues 12-46 (STKLLNISVNSLCKFRNLERAETLLIDGIRLGVLP), 47-81 (DVITYNTLIKGYTRFIGIDEAYAVTRRMREAGIEP), 82-116 (DVTTYNSLISGAAKNLMLNRVLQLFDEMLHSGLSP), 117-152 (DMWSYNTLMSCYFKLGRHGEAFKILHEDIHLAGLVP), 153-183 (GIDTYNILLDALCKSGHTDNAIELFKHLKSR), 187-221 (ELMTYNILINGLCKSRRVGSVDWMMRELKKSGYTP), 222-256 (NAVTYTTMLKMYFKTKRIEKGLQLFLKMKKEGYTF), 257-291 (DGFANCAVVSALIKTGRAEEAYECMHELVRSGTRS), 293-327 (DIVSYNTLLNLYFKDGNLDAVDDLLEEIEMKGLKP), 328-362 (DDYTHTIIVNGLLNIGNTGGAEKHLACIGEMGMQP), 363-393 (SVVTCNCLIDGLCKAGHVDRAMRLFASMEVR), and 394-428 (DEFTYTSVVHNLCKDGRLVCASKLLLSCYNKGMKI).

This sequence belongs to the PPR family. P subfamily.

This is Pentatricopeptide repeat-containing protein At5g46680 from Arabidopsis thaliana (Mouse-ear cress).